The sequence spans 205 residues: High frequency lysogenization protein HflD homolog (205 aa).

Belongs to the HflD family.

Its subcellular location is the cytoplasm. It is found in the cell inner membrane. In Vibrio parahaemolyticus serotype O3:K6 (strain RIMD 2210633), this protein is High frequency lysogenization protein HflD homolog.